Here is a 730-residue protein sequence, read N- to C-terminus: Catalase-peroxidase (730 aa).

The segment at residues 92-225 (WHSAGTYRSI…LSAVHMGLIY (134 aa)) is a cross-link (tryptophyl-tyrosyl-methioninium (Trp-Tyr) (with M-251)). The active-site Proton acceptor is the His-93. A cross-link (tryptophyl-tyrosyl-methioninium (Tyr-Met) (with W-92)) is located at residues 225 to 251 (YVNPEGPDGIPDPVASARDIRTTFRRM). His-266 is a heme b binding site.

Belongs to the peroxidase family. Peroxidase/catalase subfamily. As to quaternary structure, homodimer or homotetramer. It depends on heme b as a cofactor. Formation of the three residue Trp-Tyr-Met cross-link is important for the catalase, but not the peroxidase activity of the enzyme.

It is found in the cytoplasm. It catalyses the reaction H2O2 + AH2 = A + 2 H2O. The catalysed reaction is 2 H2O2 = O2 + 2 H2O. Bifunctional enzyme with both catalase and broad-spectrum peroxidase activity. The sequence is that of Catalase-peroxidase from Blumeria hordei (Barley powdery mildew).